Reading from the N-terminus, the 465-residue chain is Glutamate--tRNA ligase (465 aa).

The 'HIGH' region motif lies at Pro-8–Gly-18. The 'KMSKS' region motif lies at Arg-236–Arg-240. Lys-239 serves as a coordination point for ATP.

This sequence belongs to the class-I aminoacyl-tRNA synthetase family. Glutamate--tRNA ligase type 1 subfamily. Monomer.

The protein resides in the cytoplasm. It carries out the reaction tRNA(Glu) + L-glutamate + ATP = L-glutamyl-tRNA(Glu) + AMP + diphosphate. Its function is as follows. Catalyzes the attachment of glutamate to tRNA(Glu) in a two-step reaction: glutamate is first activated by ATP to form Glu-AMP and then transferred to the acceptor end of tRNA(Glu). The polypeptide is Glutamate--tRNA ligase (Nitrosospira multiformis (strain ATCC 25196 / NCIMB 11849 / C 71)).